Consider the following 648-residue polypeptide: Macrolide export ATP-binding/permease protein MacB (648 aa).

One can recognise an ABC transporter domain in the interval 5–243 (LELCNVSRSY…QGVDAAVVNT (239 aa)). 41 to 48 (GVSGSGKS) contacts ATP. A run of 5 helical transmembrane segments spans residues 273-293 (LLTM…VVVG), 417-437 (ANVV…IGVA), 523-543 (LFLT…VMNI), 577-597 (VLVC…IAFM), and 611-631 (LTAL…FGWL).

It belongs to the ABC transporter superfamily. Macrolide exporter (TC 3.A.1.122) family. Homodimer. Part of the tripartite efflux system MacAB-TolC, which is composed of an inner membrane transporter, MacB, a periplasmic membrane fusion protein, MacA, and an outer membrane component, TolC. The complex forms a large protein conduit and can translocate molecules across both the inner and outer membranes. Interacts with MacA.

Its subcellular location is the cell inner membrane. Its function is as follows. Part of the tripartite efflux system MacAB-TolC. MacB is a non-canonical ABC transporter that contains transmembrane domains (TMD), which form a pore in the inner membrane, and an ATP-binding domain (NBD), which is responsible for energy generation. Confers resistance against macrolides. In Salmonella typhi, this protein is Macrolide export ATP-binding/permease protein MacB.